A 344-amino-acid polypeptide reads, in one-letter code: Bifunctional trans-3-hydroxy-L-proline dehydratase/2-epimerase (344 aa).

S90 (proton acceptor) is an active-site residue. Substrate contacts are provided by residues 91 to 92 (GS), D252, and 257 to 258 (GT).

It belongs to the proline racemase family.

The enzyme catalyses trans-3-hydroxy-L-proline = 1-pyrroline-2-carboxylate + H2O. The catalysed reaction is trans-3-hydroxy-L-proline = cis-3-hydroxy-D-proline. In terms of biological role, bifunctional enzyme catalyzing both the dehydration of trans-3-hydroxy-L-proline (t3LHyp) to Delta(1)-pyrroline-2-carboxylate (Pyr2C) and 2-epimerization of t3LHyp to cis-3-hydroxy-D-proline (c3DHyp). No dehydratase activity with L-proline, trans-4-hydroxy-L-proline (t4LHyp), cis-4-hydroxy-L-proline (c4LHyp), D-proline, cis-4-hydroxy-D-proline (c4DHyp), trans-4-hydroxy-D-proline (t4DHyp) or L-serine as substrates. Displays neither t4LHyp epimerase nor proline racemase activity. Is likely involved in a degradation pathway that converts t3LHyp to L-proline, which would allow P.aeruginosa to grow on t3LHyp as a sole carbon source. This chain is Bifunctional trans-3-hydroxy-L-proline dehydratase/2-epimerase, found in Pseudomonas aeruginosa (strain ATCC 15692 / DSM 22644 / CIP 104116 / JCM 14847 / LMG 12228 / 1C / PRS 101 / PAO1).